Here is a 304-residue protein sequence, read N- to C-terminus: Lipid droplet-associated hydrolase (304 aa).

Residue S119 is the Nucleophile of the active site. Residues D250 and H279 each act as charge relay system in the active site.

It belongs to the AB hydrolase superfamily. LDAH family.

It is found in the lipid droplet. The enzyme catalyses a cholesterol ester + H2O = cholesterol + a fatty acid + H(+). Functionally, probable serine lipid hydrolase associated with lipid droplets. Has low cholesterol esterase activity. Appears to lack triglyceride lipase activity. Involved in cholesterol and triglyceride homeostasis; stimulates cellular triglyceride accumulation and cellular cholesterol release. This chain is Lipid droplet-associated hydrolase, found in Dictyostelium discoideum (Social amoeba).